The sequence spans 177 residues: Large ribosomal subunit protein uL6 (177 aa).

The protein belongs to the universal ribosomal protein uL6 family. In terms of assembly, part of the 50S ribosomal subunit.

This protein binds to the 23S rRNA, and is important in its secondary structure. It is located near the subunit interface in the base of the L7/L12 stalk, and near the tRNA binding site of the peptidyltransferase center. The polypeptide is Large ribosomal subunit protein uL6 (Brucella abortus (strain S19)).